The following is an 83-amino-acid chain: UPF0297 protein DSY2420 (83 aa).

The protein belongs to the UPF0297 family.

This chain is UPF0297 protein DSY2420, found in Desulfitobacterium hafniense (strain Y51).